A 156-amino-acid chain; its full sequence is Arginine repressor (156 aa).

The protein belongs to the ArgR family.

Its subcellular location is the cytoplasm. It functions in the pathway amino-acid biosynthesis; L-arginine biosynthesis [regulation]. In terms of biological role, regulates arginine biosynthesis genes. The protein is Arginine repressor of Enterobacter sp. (strain 638).